We begin with the raw amino-acid sequence, 301 residues long: 2-methoxy-6-polyprenyl-1,4-benzoquinol methylase, mitochondrial (301 aa).

A mitochondrion-targeting transit peptide spans 1-16 (MQTTRSTRLLSLARRF). The span at 20 to 31 (RTASQSAQNSKG) shows a compositional bias: polar residues. Positions 20–44 (RTASQSAQNSKGMASGAESISGKEK) are disordered. Residues threonine 111, aspartate 139, and 173-174 (DA) contribute to the S-adenosyl-L-methionine site.

It belongs to the class I-like SAM-binding methyltransferase superfamily. MenG/UbiE family. As to quaternary structure, component of a multi-subunit COQ enzyme complex.

The protein resides in the mitochondrion inner membrane. The catalysed reaction is a 2-methoxy-6-(all-trans-polyprenyl)benzene-1,4-diol + S-adenosyl-L-methionine = a 5-methoxy-2-methyl-3-(all-trans-polyprenyl)benzene-1,4-diol + S-adenosyl-L-homocysteine + H(+). The protein operates within cofactor biosynthesis; ubiquinone biosynthesis. Its function is as follows. Methyltransferase required for the conversion of 2-polyprenyl-6-methoxy-1,4-benzoquinol (DDMQH2) to 2-polyprenyl-3-methyl-6-methoxy-1,4-benzoquinol (DMQH2). The sequence is that of 2-methoxy-6-polyprenyl-1,4-benzoquinol methylase, mitochondrial from Drosophila melanogaster (Fruit fly).